We begin with the raw amino-acid sequence, 333 residues long: Ribosomal RNA small subunit methyltransferase H (333 aa).

Residues 39–41 (GGY), D57, F84, D101, and Q108 contribute to the S-adenosyl-L-methionine site.

Belongs to the methyltransferase superfamily. RsmH family.

The protein localises to the cytoplasm. The catalysed reaction is cytidine(1402) in 16S rRNA + S-adenosyl-L-methionine = N(4)-methylcytidine(1402) in 16S rRNA + S-adenosyl-L-homocysteine + H(+). Functionally, specifically methylates the N4 position of cytidine in position 1402 (C1402) of 16S rRNA. In Dinoroseobacter shibae (strain DSM 16493 / NCIMB 14021 / DFL 12), this protein is Ribosomal RNA small subunit methyltransferase H.